The primary structure comprises 469 residues: Neuraminidase (469 aa).

Residues methionine 1–threonine 9 are Intravirion-facing. The chain crosses the membrane as a helical span at residues isoleucine 10 to valine 30. An involved in apical transport and lipid raft association region spans residues glycine 11 to valine 33. Residues threonine 31–isoleucine 469 lie on the Virion surface side of the membrane. The tract at residues histidine 36–serine 88 is hypervariable stalk region. N-linked (GlcNAc...) asparagine; by host glycans are attached at residues asparagine 61, asparagine 70, and asparagine 86. A head of neuraminidase region spans residues glutamine 91–isoleucine 469. Cystine bridges form between cysteine 92/cysteine 417, cysteine 124/cysteine 129, cysteine 183/cysteine 230, cysteine 232/cysteine 237, cysteine 278/cysteine 291, cysteine 280/cysteine 289, cysteine 318/cysteine 337, and cysteine 421/cysteine 447. Arginine 118 provides a ligand contact to substrate. The N-linked (GlcNAc...) asparagine; by host glycan is linked to asparagine 146. The active-site Proton donor/acceptor is aspartate 151. Residue arginine 152 participates in substrate binding. 2 N-linked (GlcNAc...) asparagine; by host glycosylation sites follow: asparagine 200 and asparagine 234. Position 276 to 277 (glutamate 276 to glutamate 277) interacts with substrate. A substrate-binding site is contributed by arginine 292. Positions 293, 297, and 324 each coordinate Ca(2+). Position 371 (arginine 371) interacts with substrate. An N-linked (GlcNAc...) asparagine; by host glycan is attached at asparagine 402. Tyrosine 406 (nucleophile) is an active-site residue.

This sequence belongs to the glycosyl hydrolase 34 family. As to quaternary structure, homotetramer. Ca(2+) serves as cofactor. Post-translationally, N-glycosylated.

It localises to the virion membrane. It is found in the host apical cell membrane. The catalysed reaction is Hydrolysis of alpha-(2-&gt;3)-, alpha-(2-&gt;6)-, alpha-(2-&gt;8)- glycosidic linkages of terminal sialic acid residues in oligosaccharides, glycoproteins, glycolipids, colominic acid and synthetic substrates.. Inhibited by the neuraminidase inhibitors zanamivir (Relenza) and oseltamivir (Tamiflu). These drugs interfere with the release of progeny virus from infected cells and are effective against all influenza strains. Resistance to neuraminidase inhibitors is quite rare. Catalyzes the removal of terminal sialic acid residues from viral and cellular glycoconjugates. Cleaves off the terminal sialic acids on the glycosylated HA during virus budding to facilitate virus release. Additionally helps virus spread through the circulation by further removing sialic acids from the cell surface. These cleavages prevent self-aggregation and ensure the efficient spread of the progeny virus from cell to cell. Otherwise, infection would be limited to one round of replication. Described as a receptor-destroying enzyme because it cleaves a terminal sialic acid from the cellular receptors. May facilitate viral invasion of the upper airways by cleaving the sialic acid moieties on the mucin of the airway epithelial cells. Likely to plays a role in the budding process through its association with lipid rafts during intracellular transport. May additionally display a raft-association independent effect on budding. Plays a role in the determination of host range restriction on replication and virulence. Sialidase activity in late endosome/lysosome traffic seems to enhance virus replication. The protein is Neuraminidase of Aves (whales).